A 459-amino-acid chain; its full sequence is V-type ATP synthase beta chain (459 aa).

It belongs to the ATPase alpha/beta chains family.

Its function is as follows. Produces ATP from ADP in the presence of a proton gradient across the membrane. The V-type beta chain is a regulatory subunit. This chain is V-type ATP synthase beta chain, found in Thermoanaerobacter sp. (strain X514).